Here is a 253-residue protein sequence, read N- to C-terminus: Snake venom serine protease homolog HS120 (253 aa).

An N-terminal signal peptide occupies residues 1–18 (MVLIRVIANLLILQLSYA). A propeptide spanning residues 19–24 (QKSSEL) is cleaved from the precursor. The Peptidase S1 domain maps to 25–244 (VIGGDECNIN…YLPWIQSIIA (220 aa)). 6 disulfides stabilise this stretch: C31-C158, C49-C65, C98-C251, C137-C205, C169-C184, and C195-C220. N-linked (GlcNAc...) asparagine glycans are attached at residues N116 and N165.

The protein belongs to the peptidase S1 family. Snake venom subfamily. Expressed by the venom gland.

It is found in the secreted. Functionally, snake venom serine protease homolog that may act in the hemostasis system of the prey. This is Snake venom serine protease homolog HS120 from Bothrops jararaca (Jararaca).